Here is a 31-residue protein sequence, read N- to C-terminus: Cytochrome b6-f complex subunit 6 (31 aa).

Residues 4 to 26 traverse the membrane as a helical segment; that stretch reads ITSYFGFLLAASTITPALLIGLS.

The protein belongs to the PetL family. As to quaternary structure, the 4 large subunits of the cytochrome b6-f complex are cytochrome b6, subunit IV (17 kDa polypeptide, PetD), cytochrome f and the Rieske protein, while the 4 small subunits are PetG, PetL, PetM and PetN. The complex functions as a dimer.

Its subcellular location is the plastid. The protein resides in the chloroplast thylakoid membrane. Functionally, component of the cytochrome b6-f complex, which mediates electron transfer between photosystem II (PSII) and photosystem I (PSI), cyclic electron flow around PSI, and state transitions. PetL is important for photoautotrophic growth as well as for electron transfer efficiency and stability of the cytochrome b6-f complex. In Liriodendron tulipifera (Tuliptree), this protein is Cytochrome b6-f complex subunit 6.